The sequence spans 560 residues: Protein NRT1/ PTR FAMILY 2.5 (560 aa).

The disordered stretch occupies residues 1 to 20; sequence MADSKSGDTEVAHRSSDPSE. 12 helical membrane-spanning segments follow: residues 34–54, 77–97, 101–121, 141–161, 177–197, 207–227, 323–343, 372–392, 404–424, 441–461, 480–500, and 520–540; these read TLLGMSITSFGWGMNLIVFLI, MLPVVAAILADSFFGNIPVIS, FISLAGTSLLTLITSLNYLMP, ILYVALALVIIGSAGTRFTLA, FFNWFFLALYIGAITGTTAIV, LGFGLCAVANLISFIVFIAGV, AILRLVPLWAAVMFLSTPVAV, VIVLVFGCVFIMLNNWIIYPM, LQQVGIGHVFTILSMAISAVV, VLWLVPALVMVGIGEAFHFPA, SLTSVVIGISFYLSTAVIDVI, and YWVVVIGGVLNLGYFLVCSWF.

This sequence belongs to the major facilitator superfamily. Proton-dependent oligopeptide transporter (POT/PTR) (TC 2.A.17) family. As to expression, expressed in the root epidermis or cortex.

The protein localises to the membrane. In terms of biological role, transporter involved in a passive nitrate efflux. This chain is Protein NRT1/ PTR FAMILY 2.5 (NPF2.5), found in Arabidopsis thaliana (Mouse-ear cress).